Here is a 92-residue protein sequence, read N- to C-terminus: Large ribosomal subunit protein eL34 (92 aa).

It belongs to the eukaryotic ribosomal protein eL34 family.

In Staphylothermus marinus (strain ATCC 43588 / DSM 3639 / JCM 9404 / F1), this protein is Large ribosomal subunit protein eL34.